The primary structure comprises 65 residues: Large ribosomal subunit protein bL35 (65 aa).

The protein belongs to the bacterial ribosomal protein bL35 family.

The chain is Large ribosomal subunit protein bL35 from Thermoanaerobacter sp. (strain X514).